Here is a 654-residue protein sequence, read N- to C-terminus: RNA polymerase I-specific transcription initiation factor tif-1A (654 aa).

The disordered stretch occupies residues 1–37 (MKRSTANAPKLSPKHESESDPKKVKLEEEAKPTVNQA). Over residues 13-31 (PKHESESDPKKVKLEEEAK) the composition is skewed to basic and acidic residues.

Belongs to the RRN3 family.

The protein localises to the nucleus. It is found in the nucleolus. Its function is as follows. Required for efficient transcription initiation by RNA polymerase I (Pol I). This Caenorhabditis elegans protein is RNA polymerase I-specific transcription initiation factor tif-1A.